The primary structure comprises 620 residues: 1-deoxy-D-xylulose-5-phosphate synthase (620 aa).

Thiamine diphosphate is bound by residues His-80 and 121 to 123 (GHS). Asp-152 is a Mg(2+) binding site. Thiamine diphosphate contacts are provided by residues 153 to 154 (GA), Asn-181, Tyr-288, and Glu-370. Asn-181 serves as a coordination point for Mg(2+).

This sequence belongs to the transketolase family. DXPS subfamily. Homodimer. Mg(2+) serves as cofactor. The cofactor is thiamine diphosphate.

The catalysed reaction is D-glyceraldehyde 3-phosphate + pyruvate + H(+) = 1-deoxy-D-xylulose 5-phosphate + CO2. The protein operates within metabolic intermediate biosynthesis; 1-deoxy-D-xylulose 5-phosphate biosynthesis; 1-deoxy-D-xylulose 5-phosphate from D-glyceraldehyde 3-phosphate and pyruvate: step 1/1. Functionally, catalyzes the acyloin condensation reaction between C atoms 2 and 3 of pyruvate and glyceraldehyde 3-phosphate to yield 1-deoxy-D-xylulose-5-phosphate (DXP). This is 1-deoxy-D-xylulose-5-phosphate synthase from Escherichia coli (strain 55989 / EAEC).